The following is a 273-amino-acid chain: Cell wall mannoprotein 1 (273 aa).

An N-terminal signal peptide occupies residues 1–17 (MRFSAIFTLGLAGTALA). The segment at 173–247 (DVSDSAPSSS…GSASATSPPL (75 aa)) is disordered. Positions 177-247 (SAPSSSAGSS…GSASATSPPL (71 aa)) are enriched in low complexity.

The protein belongs to the cell wall mannoprotein 1 family. In terms of processing, galactomannoprotein, glycosylated.

The protein localises to the secreted. It localises to the cell wall. In terms of biological role, constitutive protein of the cell wall. Antigen target of host humoral immune response. The chain is Cell wall mannoprotein 1 from Aspergillus flavus.